Consider the following 79-residue polypeptide: U-actitoxin-Oulsp1 (79 aa).

The N-terminal stretch at 1 to 21 (MNTKLVVVFLLSAILFVSVTA) is a signal peptide. A propeptide spanning residues 22 to 43 (SRPGKDLERDEAYETYDDENKR) is cleaved from the precursor. Residues 45-79 (CKDVFPAATCRHAKSVGNCSSEKYKRNCAITCGAC) enclose the ShKT domain. Intrachain disulfides connect cysteine 45–cysteine 79, cysteine 54–cysteine 72, and cysteine 63–cysteine 76. The interval 67–68 (KY) is crucial for binding to potassium channels.

Belongs to the sea anemone type 1 potassium channel toxin family. Type 1b subfamily. Two similar peptides (OspTx2a-p1 and -p2) are obtained after synthesis and oxidative folding. They may differ by a D-Cys at position 76 (corresponding to OspTx2a-p2). Since C-terminal Cys residues are prone to racemization during solid-phase peptide synthesis, and if the presence of a D-amino acid is correct, it is probable that OspTx2a-p1 (L-Cys-76 form) corresponds to the native peptide.

Its subcellular location is the secreted. Functionally, toxin that weakly blocks the two voltage-gated potassium channels on Kv1.2/KCNA2 (IC(50)=1.8-2.5 uM) and Kv1.6/KCNA6 (IC(50)=5.6-6.2 uM). This is U-actitoxin-Oulsp1 from Oulactis sp. (Sea anemone).